The chain runs to 392 residues: L-rhamnonate dehydratase (392 aa).

The substrate site is built by H22 and R48. The Mg(2+) site is built by D214, E240, and E268. H318 serves as the catalytic Proton acceptor. Residue E338 coordinates substrate.

Belongs to the mandelate racemase/muconate lactonizing enzyme family. RhamD subfamily. Homooctamer; tetramer of dimers. Mg(2+) serves as cofactor.

The catalysed reaction is L-rhamnonate = 2-dehydro-3-deoxy-L-rhamnonate + H2O. Its function is as follows. Catalyzes the dehydration of L-rhamnonate to 2-keto-3-deoxy-L-rhamnonate (KDR). The protein is L-rhamnonate dehydratase of Burkholderia ambifaria (strain MC40-6).